The primary structure comprises 75 residues: Small ribosomal subunit protein bS16c (75 aa).

The protein belongs to the bacterial ribosomal protein bS16 family.

The protein localises to the plastid. Its subcellular location is the chloroplast. The sequence is that of Small ribosomal subunit protein bS16c from Cyanidioschyzon merolae (strain NIES-3377 / 10D) (Unicellular red alga).